Here is a 696-residue protein sequence, read N- to C-terminus: Glycine--tRNA ligase beta subunit (696 aa).

This sequence belongs to the class-II aminoacyl-tRNA synthetase family. Tetramer of two alpha and two beta subunits.

The protein localises to the cytoplasm. It catalyses the reaction tRNA(Gly) + glycine + ATP = glycyl-tRNA(Gly) + AMP + diphosphate. The sequence is that of Glycine--tRNA ligase beta subunit from Methylorubrum extorquens (strain CM4 / NCIMB 13688) (Methylobacterium extorquens).